Here is a 332-residue protein sequence, read N- to C-terminus: 2,3-diketo-L-gulonate reductase (332 aa).

Histidine 44 acts as the Proton donor in catalysis. NAD(+) is bound by residues 168–174 (ITMVDMS), 224–225 (WK), and 304–306 (GHE).

It belongs to the LDH2/MDH2 oxidoreductase family. DlgD subfamily. Homodimer.

It is found in the cytoplasm. The enzyme catalyses 3-dehydro-L-gulonate + NAD(+) = 2,3-dioxo-L-gulonate + NADH + H(+). It carries out the reaction 3-dehydro-L-gulonate + NADP(+) = 2,3-dioxo-L-gulonate + NADPH + H(+). Functionally, catalyzes the reduction of 2,3-diketo-L-gulonate in the presence of NADH, to form 3-keto-L-gulonate. The chain is 2,3-diketo-L-gulonate reductase from Escherichia coli O81 (strain ED1a).